The following is a 249-amino-acid chain: Selenoprotein BthD (249 aa).

Positions 1–22 (MPPKRNKKAEAPIAERDAGEEL) are disordered. Residues 8–19 (KAEAPIAERDAG) show a composition bias toward basic and acidic residues. The cysteinyl-selenocysteine (Cys-Sec); redox-active cross-link spans 34–37 (CRSU). U37 is a non-standard amino acid (selenocysteine). The disordered stretch occupies residues 122–249 (QQESKEQTNT…EATAGAKRRR (128 aa)). S147 bears the Phosphoserine mark. Residues 175-198 (EQKSEEEPTQVDSKEAKQSKELVK) show a composition bias toward basic and acidic residues. The segment covering 199–210 (TKRQPKAQKKQA) has biased composition (basic residues).

Expressed in the developing salivary gland at late stages of embryogenesis. Also expressed in brain, neuroblast and wing disk.

Its subcellular location is the cytoplasm. It is found in the secreted. Functionally, may be involved in a redox-related process. Required for survival and specifically for salivary gland morphogenesis. The polypeptide is Selenoprotein BthD (BthD) (Drosophila melanogaster (Fruit fly)).